Here is a 204-residue protein sequence, read N- to C-terminus: Pyridoxamine 5'-phosphate oxidase YLR456W homolog (204 aa).

FMN is bound by residues 65–66 and Asn-127; that span reads FT.

It belongs to the pyridoxamine 5'-phosphate oxidase family. It depends on FMN as a cofactor.

The protein resides in the cytoplasm. Its subcellular location is the nucleus. In Saccharomyces cerevisiae (strain ATCC 204508 / S288c) (Baker's yeast), this protein is Pyridoxamine 5'-phosphate oxidase YLR456W homolog.